Consider the following 77-residue polypeptide: Large ribosomal subunit protein bL28 (77 aa).

Belongs to the bacterial ribosomal protein bL28 family.

The protein is Large ribosomal subunit protein bL28 of Paracidovorax citrulli (strain AAC00-1) (Acidovorax citrulli).